A 162-amino-acid chain; its full sequence is Glutathione peroxidase-like peroxiredoxin GPX5 (162 aa).

Cysteine 38 is subject to S-selanylcysteine. Residue asparagine 87 is part of the active site.

It belongs to the glutathione peroxidase family. Cys-87 is S-selanylated when selenium levels are high. S-selanylation may increase or be important for glutathione peroxidase activity.

The protein resides in the cytoplasm. It carries out the reaction 2 glutathione + H2O2 = glutathione disulfide + 2 H2O. It catalyses the reaction a hydroperoxide + [thioredoxin]-dithiol = an alcohol + [thioredoxin]-disulfide + H2O. In terms of biological role, has thioredoxin peroxidase activity. May also have glutathione peroxidase activity, although this activity is controversial. Protects cells against reactive oxygen species, which may include photooxidative stress, hydrogen peroxide and organic hydroperoxides. This Chlamydomonas reinhardtii (Chlamydomonas smithii) protein is Glutathione peroxidase-like peroxiredoxin GPX5.